The primary structure comprises 1284 residues: MTIILFLVDTSSSMCQKAYVNGVQKTYLDIAKGAVETFLKYRQRTQDCLGDRYMLLTFEEPPANVKAGWKENHATFMNELKNLQSHGLTSMGESLRNAFDLLNLNRMQSGIDTYGQGRCPFYLEPSVIIVITDGGRYSYRNGVHQEIILPLSNQIPGTKFTKEPFRWDQRLFSLVLRMPGNKIDERVDGKVPHDDSPIERMCEVTGGRSYRVRSHYVLNQCIESLVQKVQPGVVLQFEPMLPKEATSATAGEAAGASTISGMGISSTSGAGPAPDIVFQPVKKMIYVQKHITQKTFPIGYWPLPEPYWPDSKAITLPPRDAHPKLKVLTPAVDEPQLVRSFPVDKYEIEGCPLTLQILNKREMNKCWQVIVTNGMHGFELPFGYLKAAPNFSQVHLYVLAYNYPALLPILHDLIHKYNMSPPSDLMYKFNAYVRSIPPYYCPFLRKALVNINVPYQLLQFLLPENVDNYLSPTIANQLKHIKNTAKQDQENLCMKVYKQLKQPKPPYRQVETGKLFTGAPLRRDLVRHPLLRDIFSKLHGEIDPVENYTIVVPQPTHQSSAKSHRNPFDIPRRDLVEEIAKMRETLLRPVSLVAKDSGHCLPIAEMGNYQEYLKNKDNPLREIEPTNVRQHMFGNPYKKDKHMVMVDEADLSDVAPMKSPNGNGPGGAPPGSPSGSGSPTGPGPSSPGSSPGGGSGPGMPGMPGMGGGMSGLMLGAGGSGGSSKKLDGTSRGRKRKAGPLPRSFEFRRSSTDSRSSSSGSESSTTGSAPGSPIPGATSSISGCDSAMGADGGPSSSCFDEDSNSNSSFVSSTSEASASDSGMSNSHLDPLRISFVFIEEETSDQDTPLNGYVHNFINGISDDAETGETEAVPGGASLPGASSANEPSSIGASPAVSATPATSVIPASNGSEVCSAVAAGSSSSISSSASSPGVLYVPLNGLTTHAAYSSNLGGPSSPLDNLSSLGGAAGGGGSGLLGVSKPGSLPLANGYGHGHSSAISPPSPLSLVPLSPLGTSTPAASSSGLSSSSAYFSHNDINDASEISRILQTCHNGTSSGSSVGAGASNSNLNGNGSTESGGGVSSDDHASLGGNSFDALKRTAGTAGSTAAGNPHYYWASGLNHHNNNNSSAAGAASGSTLSNNHNHRGHNNSSPNKLEVKINSSCGSSPTHNNGGMGSPGQSLPLIFTEEQREAARLHNVELRLQIFRDIRRPGRDYSQLLEHLNLVKGDQDMQSDFVDMCIVESLRFRRHRMASSIQEWWDRKQQLTAVGTNEATPSAEQAVAKS.

One can recognise a VWFA domain in the interval 3–134 (IILFLVDTSS…PSVIIVITDG (132 aa)). Disordered stretches follow at residues 653-824 (DVAP…GMSN), 864-895 (ETGETEAVPGGASLPGASSANEPSSIGASPAV), 1053-1086 (TSSGSSVGAGASNSNLNGNGSTESGGGVSSDDHA), and 1125-1180 (NNSS…PGQS). Gly residues predominate over residues 690–721 (SPGGGSGPGMPGMPGMGGGMSGLMLGAGGSGG). 2 stretches are compositionally biased toward low complexity: residues 752 to 781 (DSRSSSSGSESSTTGSAPGSPIPGATSSIS) and 803 to 824 (NSNSSFVSSTSEASASDSGMSN). Over residues 879–890 (GASSANEPSSIG) the composition is skewed to polar residues. 2 stretches are compositionally biased toward low complexity: residues 1053–1074 (TSSGSSVGAGASNSNLNGNGST) and 1125–1141 (NNSSAAGAASGSTLSNN). Polar residues predominate over residues 1159-1171 (INSSCGSSPTHNN).

It belongs to the Integrator subunit 6 family. In terms of assembly, belongs to the multiprotein complex Integrator, at least composed of IntS1, IntS2, IntS3, IntS4, omd/IntS5, IntS6, defl/IntS7, IntS8, IntS9, IntS10, IntS11, IntS12, asun/IntS13, IntS14 and IntS15. The core complex associates with protein phosphatase 2A subunits mts/PP2A and Pp2A-29B, to form the Integrator-PP2A (INTAC) complex.

It localises to the nucleus. Functionally, component of the integrator complex, a multiprotein complex that terminates RNA polymerase II (Pol II) transcription in the promoter-proximal region of genes. The integrator complex provides a quality checkpoint during transcription elongation by driving premature transcription termination of transcripts that are unfavorably configured for transcriptional elongation: the complex terminates transcription by (1) catalyzing dephosphorylation of the C-terminal domain (CTD) of Pol II subunit Polr2A/Rbp1 and Spt5, and (2) degrading the exiting nascent RNA transcript via endonuclease activity. The integrator complex is also involved in the 3'-end processing of the U7 snRNA, and also the spliceosomal snRNAs U1, U2, U4 and U5. Within the integrator complex, IntS6 acts as a substrate adapter for protein phosphatase 2A (PP2A). The sequence is that of Integrator complex subunit 6 from Drosophila melanogaster (Fruit fly).